The following is a 278-amino-acid chain: HTH-type transcriptional activator RhaS (278 aa).

In terms of domain architecture, HTH araC/xylS-type spans 174-272 (NQLMAWLEDH…NWSPRDIRQG (99 aa)). 2 consecutive DNA-binding regions (H-T-H motif) follow at residues 191 to 212 (EAVAEQFSLSLRTLHRQLKQHT) and 239 to 262 (VTEIAYRCGFGDSNHFSTLFRREF).

Binds DNA as a dimer.

It localises to the cytoplasm. Its function is as follows. Activates expression of the rhaBAD and rhaT operons. This chain is HTH-type transcriptional activator RhaS, found in Salmonella dublin (strain CT_02021853).